The chain runs to 441 residues: Trigger factor (441 aa).

Positions 161–246 (GDKVTIDFLG…VHEVLGEKLP (86 aa)) constitute a PPIase FKBP-type domain.

It belongs to the FKBP-type PPIase family. Tig subfamily.

Its subcellular location is the cytoplasm. It carries out the reaction [protein]-peptidylproline (omega=180) = [protein]-peptidylproline (omega=0). Functionally, involved in protein export. Acts as a chaperone by maintaining the newly synthesized protein in an open conformation. Functions as a peptidyl-prolyl cis-trans isomerase. The chain is Trigger factor from Teredinibacter turnerae (strain ATCC 39867 / T7901).